We begin with the raw amino-acid sequence, 375 residues long: Quinolinate synthase (375 aa).

The iminosuccinate site is built by His-47 and Ser-64. A [4Fe-4S] cluster-binding site is contributed by Cys-110. Iminosuccinate contacts are provided by residues 144–146 and Ser-165; that span reads YVN. A [4Fe-4S] cluster-binding site is contributed by Cys-235. Iminosuccinate contacts are provided by residues 261 to 263 and Thr-278; that span reads HPE. Residue Cys-325 participates in [4Fe-4S] cluster binding.

Belongs to the quinolinate synthase family. Type 3 subfamily. [4Fe-4S] cluster serves as cofactor.

It localises to the cytoplasm. It catalyses the reaction iminosuccinate + dihydroxyacetone phosphate = quinolinate + phosphate + 2 H2O + H(+). It functions in the pathway cofactor biosynthesis; NAD(+) biosynthesis; quinolinate from iminoaspartate: step 1/1. Functionally, catalyzes the condensation of iminoaspartate with dihydroxyacetone phosphate to form quinolinate. The sequence is that of Quinolinate synthase from Herpetosiphon aurantiacus (strain ATCC 23779 / DSM 785 / 114-95).